Consider the following 143-residue polypeptide: Transcriptional regulator SlyA (143 aa).

The HTH marR-type domain maps to 2–135 (ESTLGSDLAR…LSGLIDKLEK (134 aa)). The segment at residues 49-72 (QIQLAKAIGIEQPSLVRTLDQLEE) is a DNA-binding region (H-T-H motif).

It belongs to the SlyA family. Homodimer.

Its function is as follows. Transcription regulator that can specifically activate or repress expression of target genes. This chain is Transcriptional regulator SlyA, found in Yersinia pestis (strain Pestoides F).